Here is a 146-residue protein sequence, read N- to C-terminus: Snaclec 4 (146 aa).

The signal sequence occupies residues 1-23 (MGRFISISFGLLVVFLSLSGTEA). 3 disulfides stabilise this stretch: cysteine 27/cysteine 38, cysteine 55/cysteine 144, and cysteine 121/cysteine 136. Residues 34-145 (YDQNCYKVFT…CNFIAPVVCK (112 aa)) form the C-type lectin domain.

It belongs to the snaclec family. Heterodimer; disulfide-linked.

It localises to the secreted. Interferes with one step of hemostasis (modulation of platelet aggregation, or coagulation cascade, for example). This chain is Snaclec 4, found in Daboia siamensis (Eastern Russel's viper).